Here is a 194-residue protein sequence, read N- to C-terminus: uncharacterized protein (194 aa).

This is an uncharacterized protein from Gallus gallus (Chicken).